The primary structure comprises 205 residues: Beta-crystallin B2 (205 aa).

A2 is subject to N-acetylalanine. Residues A2–N16 are N-terminal arm. Beta/gamma crystallin 'Greek key' domains are found at residues P17–A56 and G57–K101. A connecting peptide region spans residues V102 to E106. Beta/gamma crystallin 'Greek key' domains follow at residues H107 to S148 and G149 to R191. The C-terminal arm stretch occupies residues M193–N205.

The protein belongs to the beta/gamma-crystallin family. As to quaternary structure, homo/heterodimer, or complexes of higher-order. The structure of beta-crystallin oligomers seems to be stabilized through interactions between the N-terminal arms.

Functionally, crystallins are the dominant structural components of the vertebrate eye lens. The protein is Beta-crystallin B2 (CRYBB2) of Homo sapiens (Human).